A 76-amino-acid chain; its full sequence is Endothelin-1 (76 aa).

The tract at residues 30-44 (CQCASQKDKKCWNFC) is endothelin-like.

The protein belongs to the endothelin/sarafotoxin family.

It localises to the secreted. Its function is as follows. Endothelins are endothelium-derived vasoconstrictor peptides. Probable ligand for G-protein coupled receptors EDNRA and EDNRB which activates PTK2B, BCAR1, BCAR3 and, GTPases RAP1 and RHOA cascade in glomerular mesangial cells. Also binds the DEAR/FBXW7-AS1 receptor. Promotes mesenteric arterial wall remodeling via activation of ROCK signaling and subsequent colocalization of NFATC3 with F-actin filaments. NFATC3 then translocates to the nucleus where it subsequently promotes the transcription of the smooth muscle hypertrophy and differentiation marker ACTA2. The sequence is that of Endothelin-1 (EDN1) from Macaca fascicularis (Crab-eating macaque).